The chain runs to 318 residues: Dehydrogenase/reductase SDR family member 7C-B (318 aa).

The N-terminal stretch at Met-1–Thr-32 is a signal peptide. Leu-49–Ile-73 provides a ligand contact to NAD(+). A substrate-binding site is contributed by Ser-186. Residue Tyr-199 is the Proton acceptor of the active site.

This sequence belongs to the short-chain dehydrogenases/reductases (SDR) family.

The protein localises to the secreted. Its function is as follows. Putative oxidoreductase. The protein is Dehydrogenase/reductase SDR family member 7C-B (dhrs7cb) of Danio rerio (Zebrafish).